The sequence spans 337 residues: Phosphoenolpyruvate transferase (337 aa).

D69 is a binding site for 7,8-didemethyl-8-hydroxy-5-deazariboflavin.

The protein belongs to the CofD family. Homodimer. Mg(2+) serves as cofactor.

The enzyme catalyses enolpyruvoyl-2-diphospho-5'-guanosine + 7,8-didemethyl-8-hydroxy-5-deazariboflavin = dehydro coenzyme F420-0 + GMP + H(+). It participates in cofactor biosynthesis; coenzyme F420 biosynthesis. Functionally, catalyzes the transfer of the phosphoenolpyruvate moiety from enoylpyruvoyl-2-diphospho-5'-guanosine (EPPG) to 7,8-didemethyl-8-hydroxy-5-deazariboflavin (FO) with the formation of dehydro coenzyme F420-0 and GMP. The sequence is that of Phosphoenolpyruvate transferase from Mycobacterium avium (strain 104).